Reading from the N-terminus, the 102-residue chain is Large ribosomal subunit protein P1 (102 aa).

The segment at 69–91 (APAAAAEEKKEEEKKEEKKEEDT) is disordered. The segment covering 74 to 90 (AEEKKEEEKKEEKKEED) has biased composition (basic and acidic residues).

The protein belongs to the eukaryotic ribosomal protein P1/P2 family. In terms of assembly, part of the 50S ribosomal subunit. Homodimer, it forms part of the ribosomal stalk which helps the ribosome interact with GTP-bound translation factors. Forms a heptameric uL10/P0(P1)2(P1)2(P1)2 complex, where uL10/P0 forms an elongated spine to which the P1 dimers bind in a sequential fashion.

Forms part of the ribosomal stalk, playing a central role in the interaction of the ribosome with GTP-bound translation factors. This is Large ribosomal subunit protein P1 from Methanocaldococcus jannaschii (strain ATCC 43067 / DSM 2661 / JAL-1 / JCM 10045 / NBRC 100440) (Methanococcus jannaschii).